We begin with the raw amino-acid sequence, 347 residues long: Dolichyl-diphosphooligosaccharide--protein glycosyltransferase subunit TUSC3 (347 aa).

The signal sequence occupies residues 1-41 (MGARGAPSRRRQAGRRPRYLPTGSFPFLLLLLLLCIQLGGG). Residues 42 to 196 (QKKKENLLAE…DVHIRVFRPP (155 aa)) lie on the Lumenal side of the membrane. One can recognise a Thioredoxin domain in the interval 59–187 (WSSRRSVFRM…LAKWIADRTD (129 aa)). N-linked (GlcNAc...) asparagine glycosylation is present at Asn-83. Cysteines 99 and 102 form a disulfide. Residues 197–217 (NYSGTIALALLVSLVGGLLYL) form a helical membrane-spanning segment. The Cytoplasmic segment spans residues 218 to 221 (RRNN). A helical membrane pass occupies residues 222–242 (LEFIYNKTGWAMVSLCIVFAM). Residues 243–276 (TSGQMWNHIRGPPYAHKNPHNGQVSYIHGSSQVQ) are Lumenal-facing. Residues 277–297 (FVAESHIILVLNAAITMGMDL) form a helical membrane-spanning segment. Residues 298–312 (LNEAATSKGDVGKRR) lie on the Cytoplasmic side of the membrane. A helical membrane pass occupies residues 313–333 (IICLVGLGLVVFFFSFLLSIF). Residues 334–347 (RSKYHGYPYSFLIK) are Lumenal-facing.

The protein belongs to the OST3/OST6 family. Accessory component of the STT3B-containing form of the oligosaccharyltransferase (OST) complex. OST exists in two different complex forms which contain common core subunits RPN1, RPN2, OST48, OST4, DAD1 and TMEM258, either STT3A or STT3B as catalytic subunits, and form-specific accessory subunits. OST can form stable complexes with the Sec61 complex or with both the Sec61 and TRAP complexes. The association of TUSC3 or MAGT1 with the STT3B-containing complex seems to be mutually exclusvice.

The protein resides in the endoplasmic reticulum membrane. Its pathway is protein modification; protein glycosylation. Its function is as follows. Acts as accessory component of the N-oligosaccharyl transferase (OST) complex which catalyzes the transfer of a high mannose oligosaccharide from a lipid-linked oligosaccharide donor to an asparagine residue within an Asn-X-Ser/Thr consensus motif in nascent polypeptide chains. Involved in N-glycosylation of STT3B-dependent substrates. Specifically required for the glycosylation of a subset of acceptor sites that are near cysteine residues; in this function seems to act redundantly with MAGT1. In its oxidized form proposed to form transient mixed disulfides with a glycoprotein substrate to facilitate access of STT3B to the unmodified acceptor site. Also has oxidoreductase-independent functions in the STT3B-containing OST complex possibly involving substrate recognition. Could indirectly play a role in Mg(2+) transport. The sequence is that of Dolichyl-diphosphooligosaccharide--protein glycosyltransferase subunit TUSC3 (TUSC3) from Bos taurus (Bovine).